We begin with the raw amino-acid sequence, 361 residues long: Mitogen-activated protein kinase 14 (361 aa).

The Protein kinase domain occupies 32–316 (YVPIKPIGRG…VSDALLHPYM (285 aa)). Residues 38–46 (IGRGAYGVV) and Lys61 each bind ATP. Asp158 serves as the catalytic Proton acceptor. Thr188 is modified (phosphothreonine). The TXY signature appears at 188–190 (TEY). Phosphotyrosine is present on Tyr190. The residue at position 193 (Thr193) is a Phosphothreonine.

It belongs to the protein kinase superfamily. CMGC Ser/Thr protein kinase family. MAP kinase subfamily. Interacts with MKK3. Post-translationally, dually phosphorylated on Thr-188 and Tyr-190, which activates the enzyme.

It catalyses the reaction L-seryl-[protein] + ATP = O-phospho-L-seryl-[protein] + ADP + H(+). The catalysed reaction is L-threonyl-[protein] + ATP = O-phospho-L-threonyl-[protein] + ADP + H(+). Its activity is regulated as follows. Activated by threonine and tyrosine phosphorylation. The protein is Mitogen-activated protein kinase 14 (MPK14) of Arabidopsis thaliana (Mouse-ear cress).